The chain runs to 834 residues: Meiotic sister-chromatid recombination protein 3 (834 aa).

Disordered regions lie at residues 75 to 136, 251 to 291, 343 to 378, and 458 to 479; these read PAAA…QPRT, EETE…TGSL, RKLA…KQPL, and VRRS…KKLT. The span at 343–368 shows a compositional bias: polar residues; sequence RKLAQPQQGQNQRRTVSFTQGSIDHM.

Its subcellular location is the cell membrane. Functionally, may be involved in the control of meiotic sister-chromatid recombination. The protein is Meiotic sister-chromatid recombination protein 3 (MSC3) of Candida glabrata (strain ATCC 2001 / BCRC 20586 / JCM 3761 / NBRC 0622 / NRRL Y-65 / CBS 138) (Yeast).